The chain runs to 64 residues: Large ribosomal subunit protein uL29 (64 aa).

It belongs to the universal ribosomal protein uL29 family.

The sequence is that of Large ribosomal subunit protein uL29 from Chloroherpeton thalassium (strain ATCC 35110 / GB-78).